A 195-amino-acid polypeptide reads, in one-letter code: Protein GrpE (195 aa).

This sequence belongs to the GrpE family. In terms of assembly, homodimer.

It is found in the cytoplasm. Functionally, participates actively in the response to hyperosmotic and heat shock by preventing the aggregation of stress-denatured proteins, in association with DnaK and GrpE. It is the nucleotide exchange factor for DnaK and may function as a thermosensor. Unfolded proteins bind initially to DnaJ; upon interaction with the DnaJ-bound protein, DnaK hydrolyzes its bound ATP, resulting in the formation of a stable complex. GrpE releases ADP from DnaK; ATP binding to DnaK triggers the release of the substrate protein, thus completing the reaction cycle. Several rounds of ATP-dependent interactions between DnaJ, DnaK and GrpE are required for fully efficient folding. This is Protein GrpE from Blochmanniella floridana.